The primary structure comprises 152 residues: Biotin carboxyl carrier protein of acetyl-CoA carboxylase (152 aa).

The region spanning 72-148 (IIDILSPISG…TKNQVLMKII (77 aa)) is the Biotinyl-binding domain. N6-biotinyllysine is present on lysine 114.

The protein localises to the plastid. It localises to the chloroplast. It functions in the pathway lipid metabolism; fatty acid biosynthesis. This protein is a component of the acetyl coenzyme A carboxylase complex; first, biotin carboxylase catalyzes the carboxylation of the carrier protein and then the transcarboxylase transfers the carboxyl group to form malonyl-CoA. The chain is Biotin carboxyl carrier protein of acetyl-CoA carboxylase (accB) from Cyanidium caldarium (Red alga).